A 551-amino-acid chain; its full sequence is Chaperonin GroEL 4 (551 aa).

Residues 30–33 (TLGP), Lys51, 87–91 (DGTTT), Gly415, and Asp495 contribute to the ATP site.

The protein belongs to the chaperonin (HSP60) family. Forms a cylinder of 14 subunits composed of two heptameric rings stacked back-to-back. Interacts with the co-chaperonin GroES.

The protein resides in the cytoplasm. It carries out the reaction ATP + H2O + a folded polypeptide = ADP + phosphate + an unfolded polypeptide.. Together with its co-chaperonin GroES, plays an essential role in assisting protein folding. The GroEL-GroES system forms a nano-cage that allows encapsulation of the non-native substrate proteins and provides a physical environment optimized to promote and accelerate protein folding. The polypeptide is Chaperonin GroEL 4 (Mesorhizobium japonicum (strain LMG 29417 / CECT 9101 / MAFF 303099) (Mesorhizobium loti (strain MAFF 303099))).